The primary structure comprises 180 residues: Tubulin polymerization-promoting protein homolog (180 aa).

2 stretches are compositionally biased toward basic and acidic residues: residues 136 to 158 (TGAH…RADT) and 169 to 180 (KNKDSYDKTHGK). Positions 136-180 (TGAHKERFDAEGKGKGKSGRADTTENTGYVGAYKNKDSYDKTHGK) are disordered.

The protein belongs to the TPPP family.

Functionally, regulator of microtubule dynamics. The polypeptide is Tubulin polymerization-promoting protein homolog (Caenorhabditis elegans).